We begin with the raw amino-acid sequence, 447 residues long: Cysteine--tRNA ligase (447 aa).

Residue cysteine 28 participates in Zn(2+) binding. The 'HIGH' region signature appears at 30–40; the sequence is PTVYNYIHVGN. Zn(2+) is bound by residues cysteine 211, histidine 236, and glutamate 240. Positions 268 to 272 match the 'KMSKS' region motif; the sequence is KMSKS. Lysine 271 lines the ATP pocket.

This sequence belongs to the class-I aminoacyl-tRNA synthetase family. In terms of assembly, monomer. It depends on Zn(2+) as a cofactor.

It is found in the cytoplasm. It carries out the reaction tRNA(Cys) + L-cysteine + ATP = L-cysteinyl-tRNA(Cys) + AMP + diphosphate. The polypeptide is Cysteine--tRNA ligase (Streptococcus mutans serotype c (strain ATCC 700610 / UA159)).